Consider the following 386-residue polypeptide: 8-amino-7-oxononanoate synthase (386 aa).

R23 lines the substrate pocket. G110–Y111 serves as a coordination point for pyridoxal 5'-phosphate. A substrate-binding site is contributed by H135. S181, H209, and T236 together coordinate pyridoxal 5'-phosphate. The residue at position 239 (K239) is an N6-(pyridoxal phosphate)lysine. T354 is a substrate binding site.

This sequence belongs to the class-II pyridoxal-phosphate-dependent aminotransferase family. BioF subfamily. In terms of assembly, homodimer. The cofactor is pyridoxal 5'-phosphate.

The enzyme catalyses 6-carboxyhexanoyl-[ACP] + L-alanine + H(+) = (8S)-8-amino-7-oxononanoate + holo-[ACP] + CO2. It functions in the pathway cofactor biosynthesis; biotin biosynthesis. Catalyzes the decarboxylative condensation of pimeloyl-[acyl-carrier protein] and L-alanine to produce 8-amino-7-oxononanoate (AON), [acyl-carrier protein], and carbon dioxide. In Thiobacillus denitrificans (strain ATCC 25259 / T1), this protein is 8-amino-7-oxononanoate synthase.